Here is an 80-residue protein sequence, read N- to C-terminus: uncharacterized protein (80 aa).

The interval 57-80 (GNIDSDVSDQDQIGNPSAPISNQI) is disordered.

This is an uncharacterized protein from Bacillus subtilis (strain 168).